The chain runs to 68 residues: Serine palmitoyltransferase small subunit A (68 aa).

At 1–9 (MALARAWKQ) the chain is on the cytoplasmic side. The chain crosses the membrane as a helical span at residues 10 to 26 (MSWFYYQYLLVTALYML). Topologically, residues 27–31 (EPWER) are lumenal. A helical membrane pass occupies residues 32 to 54 (TVFNSMLVSIVGMALYTGYVFMP). The Cytoplasmic segment spans residues 55 to 68 (QHIMAILHYFEIVQ).

Belongs to the SPTSS family. SPTSSA subfamily. Component of the serine palmitoyltransferase (SPT) complex, which is composed of SPTLC1, SPTLC2 or SPTLC3 and SPTSSA or SPTSSB. The heterodimer consisting of SPTLC1 and SPTLC2/SPTLC3 forms the catalytic core of the enzyme, while SPTSSA or SPTSSB subunits determine substrate specificity. SPT also interacts with ORMDL proteins, especially ORMDL3, which negatively regulate SPT activity in the presence of ceramides. Interacts with MBOAT7; the interaction plays a role in MBOAT7 localization to mitochondria-associated membranes.

It localises to the endoplasmic reticulum membrane. The protein operates within lipid metabolism; sphingolipid metabolism. In terms of biological role, component of the serine palmitoyltransferase multisubunit enzyme (SPT) that catalyzes the initial and rate-limiting step in sphingolipid biosynthesis by condensing L-serine and activated acyl-CoA (most commonly palmitoyl-CoA) to form long-chain bases. The SPT complex is composed of SPTLC1, SPTLC2 or SPTLC3 and SPTSSA or SPTSSB. Within this complex, the heterodimer consisting of SPTLC1 and SPTLC2/SPTLC3 forms the catalytic core. Within the SPT complex, SPTSSA stimulates the catalytic activity and plays a role in substrate specificity, which depends upon the overall complex composition. The SPTLC1-SPTLC2-SPTSSA complex shows a strong preference for C16-CoA substrate, while the SPTLC1-SPTLC3-SPTSSA isozyme uses both C14-CoA and C16-CoA as substrates, with a slight preference for C14-CoA. Independently of its action as a SPT component, may be involved in MBOAT7 localization to mitochondria-associated membranes, a membrane bridge between the endoplasmic reticulum and mitochondria, may hence affect MBOAT7-catalyzed incorporation of arachidonic acid into phosphatidylinositol. The protein is Serine palmitoyltransferase small subunit A (SPTSSA) of Bos taurus (Bovine).